The following is an 86-amino-acid chain: Toxin Aam3 (86 aa).

An N-terminal signal peptide occupies residues 1-19 (MNYLVMISLALLFMIGVES). An LCN-type CS-alpha/beta domain is found at 21-85 (RDGYIAQPNN…PIKIIGQKCT (65 aa)). 4 cysteine pairs are disulfide-bonded: cysteine 31-cysteine 84, cysteine 35-cysteine 56, cysteine 42-cysteine 66, and cysteine 46-cysteine 68.

It belongs to the long (4 C-C) scorpion toxin superfamily. Sodium channel inhibitor family. Alpha subfamily. In terms of processing, the C-terminal basic residue is removed by a carboxypeptidase. In terms of tissue distribution, expressed by the venom gland.

Its subcellular location is the secreted. In terms of biological role, alpha toxins bind voltage-independently at site-3 of sodium channels (Nav) and inhibit the inactivation of the activated channels, thereby blocking neuronal transmission. This chain is Toxin Aam3, found in Androctonus amoreuxi (African fattail scorpion).